Here is a 28-residue protein sequence, read N- to C-terminus: MRVNKESLQMNTYISLHGWWRTSLLRAV.

Its function is as follows. This protein is involved in control of the biosynthesis of tryptophan. In Serratia marcescens, this protein is trp operon leader peptide (trpL).